The chain runs to 205 residues: Ypt/Rab-type GTPase avaA (205 aa).

Residues 17–23 (SGVGKTS), 33–40 (FSGSYKAT), Gly66, 125–128 (NKID), and 157–159 (SAK) each bind GTP. An Effector region motif is present at residues 37–45 (YKATIGADF). Residues Cys203 and Cys205 are each lipidated (S-geranylgeranyl cysteine). Cys205 bears the Cysteine methyl ester mark.

Belongs to the small GTPase superfamily. Rab family.

Rab activation is generally mediated by a guanine exchange factor (GEF), while inactivation through hydrolysis of bound GTP is catalyzed by a GTPase activating protein (GAP). In terms of biological role, ypt/Rab-type GTPases are key regulators of membrane trafficking and intracellular vesicular transport. They act as molecular switches that convert between GTP-bound and GDP-bound states, and regulate virtually all steps of membrane traffic from the formation of the transport vesicle at the donor membrane to its fusion at the target membrane. In the GDP-bound state, Ypt proteins are predominantly cytosolic, solubilized through the interaction with a GDP dissociation inhibitor (GDI). In the GTP-bound state, the proteins are membrane bound and interact with specific effector proteins that select cargo, promote vesicle movement, or verify the correct site of fusion. AvaA functions in vacuolar biogenesis. The sequence is that of Ypt/Rab-type GTPase avaA from Emericella nidulans (strain FGSC A4 / ATCC 38163 / CBS 112.46 / NRRL 194 / M139) (Aspergillus nidulans).